The following is a 469-amino-acid chain: Ribulose bisphosphate carboxylase large chain (469 aa).

Position 5 is an N6,N6,N6-trimethyllysine (Lys-5). Residues Asn-114 and Thr-164 each coordinate substrate. The active-site Proton acceptor is the Lys-166. A substrate-binding site is contributed by Lys-168. Mg(2+) is bound by residues Lys-192, Asp-194, and Glu-195. Lys-192 bears the N6-carboxylysine mark. Residue His-285 is the Proton acceptor of the active site. Residues Arg-286, His-318, and Ser-370 each contribute to the substrate site.

The protein belongs to the RuBisCO large chain family. Type I subfamily. Heterohexadecamer of 8 large chains and 8 small chains; disulfide-linked. The disulfide link is formed within the large subunit homodimers. It depends on Mg(2+) as a cofactor. Post-translationally, the disulfide bond which can form in the large chain dimeric partners within the hexadecamer appears to be associated with oxidative stress and protein turnover.

It is found in the plastid. The protein localises to the chloroplast. It carries out the reaction 2 (2R)-3-phosphoglycerate + 2 H(+) = D-ribulose 1,5-bisphosphate + CO2 + H2O. The enzyme catalyses D-ribulose 1,5-bisphosphate + O2 = 2-phosphoglycolate + (2R)-3-phosphoglycerate + 2 H(+). In terms of biological role, ruBisCO catalyzes two reactions: the carboxylation of D-ribulose 1,5-bisphosphate, the primary event in carbon dioxide fixation, as well as the oxidative fragmentation of the pentose substrate in the photorespiration process. Both reactions occur simultaneously and in competition at the same active site. This Calycophyllum candidissimum (Degame lemonwood tree) protein is Ribulose bisphosphate carboxylase large chain.